The chain runs to 142 residues: Ribosome maturation factor RimP (142 aa).

Belongs to the RimP family.

The protein resides in the cytoplasm. In terms of biological role, required for maturation of 30S ribosomal subunits. The protein is Ribosome maturation factor RimP of Nitratiruptor sp. (strain SB155-2).